The sequence spans 316 residues: Protoheme IX farnesyltransferase 2 (316 aa).

Residues 1–15 (MEQNLNSEQKPQSSA) show a composition bias toward polar residues. Residues 1–24 (MEQNLNSEQKPQSSAKPRGKSSRS) are disordered. 7 helical membrane passes run 62–82 (IPEMIFSTVGSALVIGAAGAF), 117–137 (IVMLIIGLAVLALASPLAAAF), 163–183 (IGSISGAVPPLIGWSAVSTDI), 188–208 (IARFIFVMVIWQMPHFYAIAI), 231–251 (TYYQTNFYLILLILSSFLFGS), 252–272 (LSVGIMLVALLLSIAWLVMSI), and 293–313 (LFHMTILFTTVIVYSLVGVIF).

This sequence belongs to the UbiA prenyltransferase family. Protoheme IX farnesyltransferase subfamily. In terms of assembly, interacts with CtaA.

Its subcellular location is the cell membrane. It carries out the reaction heme b + (2E,6E)-farnesyl diphosphate + H2O = Fe(II)-heme o + diphosphate. Its pathway is porphyrin-containing compound metabolism; heme O biosynthesis; heme O from protoheme: step 1/1. Functionally, converts heme B (protoheme IX) to heme O by substitution of the vinyl group on carbon 2 of heme B porphyrin ring with a hydroxyethyl farnesyl side group. The polypeptide is Protoheme IX farnesyltransferase 2 (Lysinibacillus sphaericus (strain C3-41)).